The primary structure comprises 648 residues: Protein teflon (648 aa).

The C2H2-type 1 zinc finger occupies 33 to 56 (LYCHFCRDLFTQLPEFLRHLQGAH). Disordered stretches follow at residues 76-127 (SGEQ…GSQN) and 146-170 (EHIN…NSES). Positions 85–94 (VGHNSSSSDS) are enriched in polar residues. A compositionally biased stretch (basic and acidic residues) spans 96 to 107 (GLAKSEDSRATE). The segment at 598–620 (YFCKCCDDIFTLNEDYIRHLVSQ) adopts a C2H2-type 2; degenerate zinc-finger fold. A C2H2-type 3 zinc finger spans residues 624–647 (YQCTKCIKTFKYQGHYDKHMRTVH).

Belongs to the Teflon family.

It is found in the nucleus. The protein localises to the chromosome. Functionally, specifically required in males for proper segregation of autosomal bivalents at meiosis I. Expression is required in the male germ line prior to spermatocyte stage S4. May have a role as a bridging molecule maintaining adhesion to hold autosome bivalents together via heterochromatic connections. In Drosophila yakuba (Fruit fly), this protein is Protein teflon.